The sequence spans 607 residues: WD repeat-containing protein 1-A (607 aa).

WD repeat units lie at residues glutamate 4–isoleucine 45, proline 48–threonine 87, leucine 93–threonine 135, serine 138–glycine 176, lysine 180–glycine 218, valine 224–valine 263, threonine 270–lysine 306, arginine 311–alanine 351, threonine 358–valine 408, leucine 432–isoleucine 474, lysine 480–valine 518, serine 523–leucine 561, and threonine 566–valine 604.

This sequence belongs to the WD repeat AIP1 family.

The protein resides in the cell membrane. It is found in the cytoplasm. Its subcellular location is the cytoskeleton. The protein localises to the nucleus. Its function is as follows. Induces disassembly of actin filaments in conjunction with ADF/cofilin family proteins. Doesn't sever actin filaments alone, but caps the barbed ends of filaments severed by cofilin, which blocks annealing and depolymerization and allows more extensive severing by cofilin. This chain is WD repeat-containing protein 1-A (wdr1-a), found in Xenopus laevis (African clawed frog).